We begin with the raw amino-acid sequence, 436 residues long: Drebrin-like protein (436 aa).

Residues 2–133 (AVNLSRNGPA…EPECIMEKVA (132 aa)) form the ADF-H domain. The residue at position 26 (threonine 26) is a Phosphothreonine. Phosphoserine is present on serine 160. An N6-acetyllysine modification is found at lysine 176. Residues 179 to 233 (FWAKAEKEEENRRLEEKRRAEEERQRLEEERRERELQEAARREQRYQEQHRSAGA) are a coiled coil. 2 stretches are compositionally biased toward basic and acidic residues: residues 185–229 (KEEE…EQHR) and 264–275 (HPREIFKQKERA). The disordered stretch occupies residues 185–341 (KEEENRRLEE…AQTEEEPTYE (157 aa)). Residues 276–286 (MSTTSVTSSQP) show a composition bias toward polar residues. A phosphoserine mark is found at serine 277, serine 280, serine 283, and serine 291. The span at 294-303 (LQKQLTQPET) shows a compositional bias: polar residues. Lysine 296 carries the N6-acetyllysine modification. Threonine 299 bears the Phosphothreonine mark. 2 positions are modified to phosphotyrosine: tyrosine 340 and tyrosine 350. The SH3 domain maps to 377–436 (GQGLCARALYDYQAADDTEISFDPENLITGIEVIDEGWWRGYGPDGHFGMFPANYVELIE).

It belongs to the ABP1 family. Interacts with SHANK3, SYN1 and PRAM1. Interacts with SHANK2. Interacts with FGD1, DNM1 and MAP4K1. Interacts with ANKRD54. Interacts with COBL. Interacts with WASL and WIPF1. In terms of tissue distribution, detected in hippocampus neurons and in the Purkinje cell layer in cerebellum (at protein level). Predominantly expressed in brain, thymus and spleen. Also found in testis, heart and lung. Little or no expression detected in ovary or muscle.

It localises to the cytoplasm. The protein localises to the cytoskeleton. Its subcellular location is the cell projection. It is found in the lamellipodium. The protein resides in the ruffle. It localises to the cell cortex. The protein localises to the cytosol. Its subcellular location is the synapse. It is found in the perikaryon. The protein resides in the neuron projection. It localises to the cell membrane. The protein localises to the cytoplasmic vesicle. Its subcellular location is the clathrin-coated vesicle membrane. It is found in the golgi apparatus membrane. The protein resides in the podosome. It localises to the early endosome. The protein localises to the dendrite. Its subcellular location is the postsynaptic density. Functionally, adapter protein that binds F-actin and DNM1, and thereby plays a role in receptor-mediated endocytosis. Plays a role in the reorganization of the actin cytoskeleton, formation of cell projections, such as neurites, in neuron morphogenesis and synapse formation via its interaction with WASL and COBL. Does not bind G-actin and promote actin polymerization by itself. Required for the formation of organized podosome rosettes. May act as a common effector of antigen receptor-signaling pathways in leukocytes. Acts as a key component of the immunological synapse that regulates T-cell activation by bridging TCRs and the actin cytoskeleton to gene activation and endocytic processes. This is Drebrin-like protein from Mus musculus (Mouse).